Here is a 218-residue protein sequence, read N- to C-terminus: MASRGGGRGCGRGQLTFNVEAVGIGKGDALPPPTLQPSPLFPPLEFRPVPLPSGEEGEYVLALKQELRGAMRQLPYFIRPAVPKRDVERYSDKYQMSGPIDNAIDWNPDWRRLPRELKIRVRKLQKERTTIILPKRPPKTTEDKEETIQKLETLEKKEEEVTSEEDEEKEEEEEKEEEEEEEYDEEEHEEETDYIMSYFDNGEDFGGDSDDNMDEAIY.

The interval 130–218 is disordered; the sequence is TIILPKRPPK…SDDNMDEAIY (89 aa). Over residues 139–160 the composition is skewed to basic and acidic residues; it reads KTTEDKEETIQKLETLEKKEEE. Acidic residues-rich tracts occupy residues 161 to 193 and 201 to 218; these read VTSEEDEEKEEEEEKEEEEEEEYDEEEHEEETD and NGEDFGGDSDDNMDEAIY.

The protein belongs to the eukaryotic RPC7 RNA polymerase subunit family. Component of the RNA polymerase III (Pol III) complex consisting of 17 subunits. Pol III exists as two alternative complexes defined by the mutually exclusive incorporation of subunit POLR3G/RPC7alpha or POLR3GL/RPC7beta. Found in a trimeric complex with POLR3C/RPC3 and POLR3F/RPC6. Directly interacts with POLR3C.

It localises to the nucleus. Its function is as follows. DNA-dependent RNA polymerase catalyzes the transcription of DNA into RNA using the four ribonucleoside triphosphates as substrates. Specific peripheric component of RNA polymerase III which synthesizes small RNAs, such as 5S rRNA and tRNAs. This Bos taurus (Bovine) protein is DNA-directed RNA polymerase III subunit RPC7-like (POLR3GL).